The following is a 248-amino-acid chain: Ubiquinone/menaquinone biosynthesis C-methyltransferase UbiE (248 aa).

Positions 68 and 92 each coordinate S-adenosyl-L-methionine.

The protein belongs to the class I-like SAM-binding methyltransferase superfamily. MenG/UbiE family.

The catalysed reaction is a 2-demethylmenaquinol + S-adenosyl-L-methionine = a menaquinol + S-adenosyl-L-homocysteine + H(+). It catalyses the reaction a 2-methoxy-6-(all-trans-polyprenyl)benzene-1,4-diol + S-adenosyl-L-methionine = a 5-methoxy-2-methyl-3-(all-trans-polyprenyl)benzene-1,4-diol + S-adenosyl-L-homocysteine + H(+). It functions in the pathway quinol/quinone metabolism; menaquinone biosynthesis; menaquinol from 1,4-dihydroxy-2-naphthoate: step 2/2. Its pathway is cofactor biosynthesis; ubiquinone biosynthesis. Methyltransferase required for the conversion of demethylmenaquinol (DMKH2) to menaquinol (MKH2) and the conversion of 2-polyprenyl-6-methoxy-1,4-benzoquinol (DDMQH2) to 2-polyprenyl-3-methyl-6-methoxy-1,4-benzoquinol (DMQH2). This chain is Ubiquinone/menaquinone biosynthesis C-methyltransferase UbiE, found in Rickettsia massiliae (strain Mtu5).